The following is a 246-amino-acid chain: uncharacterized protein (246 aa).

The N-terminal stretch at M1–A24 is a signal peptide. 2 helical membrane-spanning segments follow: residues Y71–V91 and F104–A124.

The protein localises to the cell membrane. This is an uncharacterized protein from Mycobacterium tuberculosis (strain ATCC 25618 / H37Rv).